A 167-amino-acid chain; its full sequence is MEETYIDTLDPEKLLQCPYDKNHQIRACRFPYHLIKCRKNHPDVANKLATCPFNARHQVPRAEISHHISSCDDKSCIEQDVVNQTRSLGQETMAESTWRCPPCDEDWDKDLWEQTSTPFVWGTANYCGNNSPASNIVMEHKSNLASGMRVPKSLPYVLPWKNNGNAQ.

2 consecutive CHHC U11-48K-type zinc fingers follow at residues 14–41 and 48–75; these read LLQC…RKNH and LATC…DDKS. Residues Cys-17, His-23, His-33, Cys-37, Cys-51, His-57, His-67, and Cys-71 each contribute to the Zn(2+) site.

The protein belongs to the UPF0224 (FAM112) family.

It is found in the cytoplasm. In terms of biological role, required for spermatogenesis and is involved in the suppression of retrotransposon transcription in male germ cells. This is Gametocyte-specific factor 1 (GTSF1) from Bos taurus (Bovine).